Consider the following 388-residue polypeptide: Envelope protein F13 homolog (388 aa).

A lipid anchor (N-myristoyl glycine; by host) is attached at glycine 2. Positions 310–337 (GDAINNTKLLVVDDEYVHVSNADIDGTH) constitute a PLD phosphodiesterase domain.

The protein localises to the virion membrane. Its subcellular location is the host endoplasmic reticulum membrane. Its function is as follows. Envelope protein associated with the inner side of the enveloped virion (EV) membrane. This Molluscum contagiosum virus subtype 2 (MOCV) protein is Envelope protein F13 homolog (P43K).